The primary structure comprises 425 residues: Putative integrase/recombinase y4rF (425 aa).

The region spanning 123–210 is the Core-binding (CB) domain; it reads DPDALLLASF…HIRTFLRFLC (88 aa). The Tyr recombinase domain occupies 233 to 418; the sequence is HLPPRLAWGD…AASQLAEVAL (186 aa). Catalysis depends on residues arginine 273, lysine 298, histidine 370, arginine 373, and histidine 396. Tyrosine 405 (O-(3'-phospho-DNA)-tyrosine intermediate) is an active-site residue.

This sequence belongs to the 'phage' integrase family.

The chain is Putative integrase/recombinase y4rF from Sinorhizobium fredii (strain NBRC 101917 / NGR234).